A 438-amino-acid chain; its full sequence is Cysteine--tRNA ligase (438 aa).

Cys-28 provides a ligand contact to Zn(2+). Residues 30–40 carry the 'HIGH' region motif; it reads PTVYNHLHLGN. Residues Cys-207, His-232, and Glu-236 each contribute to the Zn(2+) site. The 'KMSKS' region motif lies at 264 to 268; sequence KMSKS. Lys-267 contacts ATP.

This sequence belongs to the class-I aminoacyl-tRNA synthetase family. Monomer. It depends on Zn(2+) as a cofactor.

It localises to the cytoplasm. The catalysed reaction is tRNA(Cys) + L-cysteine + ATP = L-cysteinyl-tRNA(Cys) + AMP + diphosphate. The sequence is that of Cysteine--tRNA ligase from Onion yellows phytoplasma (strain OY-M).